Consider the following 239-residue polypeptide: Ribonuclease 3 (239 aa).

Residues 18-141 enclose the RNase III domain; that stretch reads YLTLEKALGY…LMAGVYLEAG (124 aa). Glu-54 provides a ligand contact to Mg(2+). Asp-58 is an active-site residue. Mg(2+) is bound by residues Ser-127 and Glu-130. Glu-130 is a catalytic residue. The region spanning 168–237 is the DRBM domain; it reads DYKTALQELT…AYQALQKLKE (70 aa).

It belongs to the ribonuclease III family. Homodimer. Mg(2+) is required as a cofactor.

It is found in the cytoplasm. The catalysed reaction is Endonucleolytic cleavage to 5'-phosphomonoester.. Functionally, digests double-stranded RNA. Involved in the processing of primary rRNA transcript to yield the immediate precursors to the large and small rRNAs (23S and 16S). Processes some mRNAs, and tRNAs when they are encoded in the rRNA operon. Processes pre-crRNA and tracrRNA of type II CRISPR loci if present in the organism. The sequence is that of Ribonuclease 3 from Helicobacter pylori (strain J99 / ATCC 700824) (Campylobacter pylori J99).